A 234-amino-acid polypeptide reads, in one-letter code: MANVALLGCTGMVGSHILTHLLGNSSVARIDTISRRTPQPATAAPQEKLTTFVSDDSSKWASQLSSLTPTPDIFISAFGTTRGAAGGFENQYKIEHGLNVEMARAARDAGTKVYVLISSTGADKNSSFGYPRMKGEIEEEVKAMGFDRTIILRPGLISGERQESRPAEAVMRGFAGLVGKIHSGLKDGWAQDADVIAKAAVNAGVKALNGEVPAGSEKVWVMYGKDIIQYGKGQ.

Residues 1-36 (MANVALLGCTGMVGSHILTHLLGNSSVARIDTISRR) constitute a mitochondrion transit peptide.

It belongs to the FMP52 family.

It is found in the mitochondrion outer membrane. This chain is Protein fmp52, mitochondrial (fmp52), found in Aspergillus niger (strain ATCC MYA-4892 / CBS 513.88 / FGSC A1513).